A 151-amino-acid chain; its full sequence is Probable cGMP 3',5'-cyclic phosphodiesterase subunit delta (151 aa).

It belongs to the PDE6D/unc-119 family. In terms of assembly, interacts with Pde6.

It localises to the nucleus. The protein resides in the cytoplasm. The sequence is that of Probable cGMP 3',5'-cyclic phosphodiesterase subunit delta from Aedes aegypti (Yellowfever mosquito).